The sequence spans 280 residues: 4-diphosphocytidyl-2-C-methyl-D-erythritol kinase (280 aa).

Lysine 8 is an active-site residue. Proline 91–threonine 101 contributes to the ATP binding site. The active site involves aspartate 133.

This sequence belongs to the GHMP kinase family. IspE subfamily.

The catalysed reaction is 4-CDP-2-C-methyl-D-erythritol + ATP = 4-CDP-2-C-methyl-D-erythritol 2-phosphate + ADP + H(+). Its pathway is isoprenoid biosynthesis; isopentenyl diphosphate biosynthesis via DXP pathway; isopentenyl diphosphate from 1-deoxy-D-xylulose 5-phosphate: step 3/6. Functionally, catalyzes the phosphorylation of the position 2 hydroxy group of 4-diphosphocytidyl-2C-methyl-D-erythritol. The chain is 4-diphosphocytidyl-2-C-methyl-D-erythritol kinase from Clostridium botulinum (strain Loch Maree / Type A3).